We begin with the raw amino-acid sequence, 372 residues long: GDP-mannose 4,6-dehydratase (372 aa).

Residues 8 to 13, 63 to 64, 85 to 89, and Tyr-100 each bind NADP(+); these read GITGQD, DL, and LGAQS. Thr-132 is an active-site residue. Active-site nucleophile residues include Glu-134 and Tyr-156. Positions 160, 186, and 191 each coordinate NADP(+).

This sequence belongs to the NAD(P)-dependent epimerase/dehydratase family. GDP-mannose 4,6-dehydratase subfamily. Requires NADP(+) as cofactor.

It carries out the reaction GDP-alpha-D-mannose = GDP-4-dehydro-alpha-D-rhamnose + H2O. Its pathway is bacterial outer membrane biogenesis; LPS O-antigen biosynthesis. It functions in the pathway nucleotide-sugar biosynthesis; GDP-L-fucose biosynthesis via de novo pathway; GDP-L-fucose from GDP-alpha-D-mannose: step 1/2. Functionally, catalyzes the conversion of GDP-D-mannose to GDP-4-dehydro-6-deoxy-D-mannose. This chain is GDP-mannose 4,6-dehydratase, found in Yersinia enterocolitica serotype O:8 / biotype 1B (strain NCTC 13174 / 8081).